The following is a 1859-amino-acid chain: Protein TIC 214 (1859 aa).

The next 6 helical transmembrane spans lie at 18–38 (IINS…FSIG), 64–84 (FITG…HLAL), 87–107 (PHTI…WNNH), 124–144 (LSIQ…HFIL), 172–192 (VGWL…LFWI), and 221–241 (IFSI…PAPI). The tract at residues 247 to 314 (KETSKTEERG…TEEIRVNGKE (68 aa)) is disordered. Residues 256–268 (GESEEERDVEIET) are compositionally biased toward acidic residues. The span at 273–284 (KGTKQEQERSTE) shows a compositional bias: basic and acidic residues. A compositionally biased stretch (acidic residues) spans 295–306 (EKEDPDKIDETE).

This sequence belongs to the TIC214 family. As to quaternary structure, part of the Tic complex.

It is found in the plastid. The protein resides in the chloroplast inner membrane. Functionally, involved in protein precursor import into chloroplasts. May be part of an intermediate translocation complex acting as a protein-conducting channel at the inner envelope. The sequence is that of Protein TIC 214 from Buxus microphylla (Littleleaf boxwood).